The chain runs to 558 residues: V-set and immunoglobulin domain-containing protein 10 (558 aa).

The first 20 residues, 1 to 20 (MAGLRVLLCLGALLARQGSA), serve as a signal peptide directing secretion. Residues 21–426 (GLQLLLNPSR…IWLSVKEPLN (406 aa)) lie on the Extracellular side of the membrane. N-linked (GlcNAc...) asparagine glycans are attached at residues Asn-32, Asn-60, Asn-121, Asn-150, Asn-159, and Asn-218. Ig-like C2-type domains lie at 37-140 (PNSE…RLRV), 144-235 (PAYV…RKVT), 248-327 (PQCS…VKLS), and 332-420 (PSQP…IWLS). Cys-65 and Cys-124 form a disulfide bridge. Intrachain disulfides connect Cys-174-Cys-221 and Cys-265-Cys-308. Residue Asn-344 is glycosylated (N-linked (GlcNAc...) asparagine). Residues Cys-349 and Cys-404 are joined by a disulfide bond. Residues 427–447 (IGGIVGTVVSLLLLGLAVVSG) form a helical membrane-spanning segment. Over 448–558 (LTLYYSPAFW…GIVQEDGKPV (111 aa)) the chain is Cytoplasmic. A compositionally biased stretch (acidic residues) spans 477–506 (DSEEEEEEEEEEEEKEDVAEEVEQETNETE). Disordered regions lie at residues 477–515 (DSEE…ISKH) and 532–558 (MGNG…GKPV).

It is found in the membrane. The polypeptide is V-set and immunoglobulin domain-containing protein 10 (Vsig10) (Mus musculus (Mouse)).